Reading from the N-terminus, the 320-residue chain is 3-hydroxybenzoate 6-hydroxylase 2 (320 aa).

The disordered stretch occupies residues 1–25; the sequence is MRSTNTRSARSRPTKRSVNASATPT. Polar residues predominate over residues 16–25; that stretch reads RSVNASATPT.

This sequence belongs to the 3-hydroxybenzoate 6-hydroxylase family. FAD is required as a cofactor.

The enzyme catalyses 3-hydroxybenzoate + NADH + O2 + H(+) = 2,5-dihydroxybenzoate + NAD(+) + H2O. In terms of biological role, catalyzes the conversion of 3-hydroxybenzoate to gentisate. The chain is 3-hydroxybenzoate 6-hydroxylase 2 (hbzD) from Aquipseudomonas alcaligenes (Pseudomonas alcaligenes).